Consider the following 125-residue polypeptide: Large ribosomal subunit protein bL12 (125 aa).

It belongs to the bacterial ribosomal protein bL12 family. As to quaternary structure, homodimer. Part of the ribosomal stalk of the 50S ribosomal subunit. Forms a multimeric L10(L12)X complex, where L10 forms an elongated spine to which 2 to 4 L12 dimers bind in a sequential fashion. Binds GTP-bound translation factors.

Forms part of the ribosomal stalk which helps the ribosome interact with GTP-bound translation factors. Is thus essential for accurate translation. The chain is Large ribosomal subunit protein bL12 from Paraburkholderia phymatum (strain DSM 17167 / CIP 108236 / LMG 21445 / STM815) (Burkholderia phymatum).